The sequence spans 110 residues: Large ribosomal subunit protein uL24 (110 aa).

It belongs to the universal ribosomal protein uL24 family. Part of the 50S ribosomal subunit.

Functionally, one of two assembly initiator proteins, it binds directly to the 5'-end of the 23S rRNA, where it nucleates assembly of the 50S subunit. One of the proteins that surrounds the polypeptide exit tunnel on the outside of the subunit. This chain is Large ribosomal subunit protein uL24, found in Chloroflexus aggregans (strain MD-66 / DSM 9485).